The chain runs to 117 residues: MSATLSAYRNALRATKVVFRHDLPILTAARTQIKENIRNNSNLKDTTEIEEAVKKLNDVSKFLISNIVQGEKQDDGKYFLNFHEKTELGDNESIKQGKKNLGSLAGKKGSSIRSCKD.

The transit peptide at Met-1–Asn-10 directs the protein to the mitochondrion. The interval Asn-91 to Asp-117 is disordered.

The protein belongs to the complex I LYR family. MZM1 subfamily. In terms of assembly, interacts with RIP1.

It is found in the mitochondrion matrix. Functionally, assembly factor required for Rieske Fe-S protein RIP1 incorporation into the cytochrome b-c1 (CIII) complex. Functions as a chaperone, binding to this subunit within the mitochondrial matrix and stabilizing it prior to its translocation and insertion into the late CIII dimeric intermediate within the mitochondrial inner membrane. Modulates the mitochondrial matrix zinc pool. The protein is Mitochondrial zinc maintenance protein 1, mitochondrial (MZM1) of Candida tropicalis (strain ATCC MYA-3404 / T1) (Yeast).